We begin with the raw amino-acid sequence, 446 residues long: Histone acetyltransferase ESA1 (446 aa).

The 52-residue stretch at 24–75 folds into the Tudor-knot domain; that stretch reads IKCQCWVRKDEEERLAEILSINARVSPSKFYVHYVNFNKRLDEWVTGDRINL. A disordered region spans residues 86–121; that stretch reads RQLEEDTNKKQKKKKKFPQKAAVVESDAKSSEMGEG. An MYST-type HAT domain is found at 163–434; it reads AHVRNLSKII…IDAEKLLWKP (272 aa). The segment at 196–221 adopts a C2HC MYST-type; degenerate zinc-finger fold; sequence VYIDDFTLQYFGSRKQYERYRKKCTL. The ESA1-RPD3 motif motif lies at 246–267; that stretch reads RTWCRNLCLLSKLFLDHKTLYY. The residue at position 263 (Lys263) is an N6-acetyllysine; by autocatalysis. Acetyl-CoA contacts are provided by residues 304–308 and 313–319; these read ACILT and QRMGYGR. The Proton donor/acceptor role is filled by Glu339. Ser343 contacts acetyl-CoA.

This sequence belongs to the MYST (SAS/MOZ) family. As to quaternary structure, component of the NuA4 histone acetyltransferase complex. Post-translationally, autoacetylation at Lys-263 is required for proper function.

The protein resides in the nucleus. Its subcellular location is the chromosome. The catalysed reaction is L-lysyl-[histone] + acetyl-CoA = N(6)-acetyl-L-lysyl-[histone] + CoA + H(+). The enzyme catalyses L-lysyl-[protein] + acetyl-CoA = N(6)-acetyl-L-lysyl-[protein] + CoA + H(+). It catalyses the reaction 2-hydroxyisobutanoyl-CoA + L-lysyl-[protein] = N(6)-(2-hydroxyisobutanoyl)-L-lysyl-[protein] + CoA + H(+). It carries out the reaction (2E)-butenoyl-CoA + L-lysyl-[protein] = N(6)-(2E)-butenoyl-L-lysyl-[protein] + CoA + H(+). Catalytic component of the NuA4 histone acetyltransferase (HAT) complex which is involved in epigenetic transcriptional activation of selected genes principally by acetylation of nucleosomal histones H4, H3, H2B, H2A and H2A variant H2A.Z. Acetylates histone H4 to form H4K5ac, H4K8ac, H4K12ac and H4K16ac, histone H3 to form H3K14ac, and histone H2A to form H2AK4ac and H2AK7ac. The NuA4 complex is involved in the DNA damage response and is required for chromosome segregation. The NuA4 complex plays a direct role in repair of DNA double-strand breaks (DSBs) through homologous recombination. Recruitment to promoters depends on H3K4me. Also acetylates non-histone proteins. In addition to protein acetyltransferase, can use different acyl-CoA substrates, such as 2-hydroxyisobutanoyl-CoA (2-hydroxyisobutyryl-CoA) or (2E)-butenoyl-CoA (crotonyl-CoA), and is able to mediate protein 2-hydroxyisobutyrylation and crotonylation, respectively. The sequence is that of Histone acetyltransferase ESA1 (ESA1) from Candida glabrata (strain ATCC 2001 / BCRC 20586 / JCM 3761 / NBRC 0622 / NRRL Y-65 / CBS 138) (Yeast).